Here is a 274-residue protein sequence, read N- to C-terminus: 5-deoxy-glucuronate isomerase (274 aa).

It belongs to the isomerase IolB family.

The enzyme catalyses 5-deoxy-D-glucuronate = 5-dehydro-2-deoxy-D-gluconate. It participates in polyol metabolism; myo-inositol degradation into acetyl-CoA; acetyl-CoA from myo-inositol: step 4/7. In terms of biological role, involved in the isomerization of 5-deoxy-glucuronate (5DG) to 5-dehydro-2-deoxy-D-gluconate (DKG or 2-deoxy-5-keto-D-gluconate). This is 5-deoxy-glucuronate isomerase from Geobacillus thermodenitrificans (strain NG80-2).